A 590-amino-acid polypeptide reads, in one-letter code: Oligoendopeptidase F homolog (590 aa).

Zn(2+) is bound at residue His381. Residue Glu382 is part of the active site. Positions 385 and 388 each coordinate Zn(2+).

It belongs to the peptidase M3B family. Zn(2+) is required as a cofactor.

The sequence is that of Oligoendopeptidase F homolog (pepF) from Borreliella burgdorferi (strain ATCC 35210 / DSM 4680 / CIP 102532 / B31) (Borrelia burgdorferi).